The following is a 75-amino-acid chain: Small ribosomal subunit protein bS18 (75 aa).

The protein belongs to the bacterial ribosomal protein bS18 family. In terms of assembly, part of the 30S ribosomal subunit. Forms a tight heterodimer with protein bS6.

Functionally, binds as a heterodimer with protein bS6 to the central domain of the 16S rRNA, where it helps stabilize the platform of the 30S subunit. The sequence is that of Small ribosomal subunit protein bS18 from Acinetobacter baumannii (strain AB307-0294).